We begin with the raw amino-acid sequence, 201 residues long: Transcription factor MYB82 (201 aa).

HTH myb-type domains lie at 9–61 (KSYV…KNYL) and 62–116 (RPNI…NKKP). 2 DNA-binding regions (H-T-H motif) span residues 37-61 (WADI…KNYL) and 89-112 (WSLI…NTHL). Residues 112-133 (LNKKPNSRRQNAPESIVGATPF) are disordered.

In terms of assembly, homodimer and heterodimer with GL1. Part of the WD40-bHLH-MYB complex. Interacts with BHLH012/MYC1 and BHLH042/TT8. Interacts (via N-terminus) with GL1 and GL3. In terms of tissue distribution, mainly expressed in the trichomes of new leaves.

The protein localises to the nucleus. Functionally, transcription activation factor positively regulating trichomes development. Has a function nearly equivalent to that of GL1 and can complement gl1 mutants. The polypeptide is Transcription factor MYB82 (MYB82) (Arabidopsis thaliana (Mouse-ear cress)).